A 511-amino-acid chain; its full sequence is GMP synthase [glutamine-hydrolyzing] (511 aa).

The Glutamine amidotransferase type-1 domain maps to 5–195 (IVIVLDFGGQ…LFNICGCKGD (191 aa)). Residue Cys-82 is the Nucleophile of the active site. Residues His-169 and Glu-171 contribute to the active site. One can recognise a GMPS ATP-PPase domain in the interval 196–386 (WKTSSFIEER…LGIPEKIVKR (191 aa)). 223–229 (SGGVDSS) is a binding site for ATP.

In terms of assembly, homodimer.

It carries out the reaction XMP + L-glutamine + ATP + H2O = GMP + L-glutamate + AMP + diphosphate + 2 H(+). It participates in purine metabolism; GMP biosynthesis; GMP from XMP (L-Gln route): step 1/1. In terms of biological role, catalyzes the synthesis of GMP from XMP. The sequence is that of GMP synthase [glutamine-hydrolyzing] from Caldicellulosiruptor saccharolyticus (strain ATCC 43494 / DSM 8903 / Tp8T 6331).